Here is a 361-residue protein sequence, read N- to C-terminus: tRNA/tmRNA (uracil-C(5))-methyltransferase (361 aa).

Residues Gln-185, Tyr-213, Asn-218, Glu-234, and Asp-294 each coordinate S-adenosyl-L-methionine. Cys-319 acts as the Nucleophile in catalysis. Glu-353 acts as the Proton acceptor in catalysis.

Belongs to the class I-like SAM-binding methyltransferase superfamily. RNA M5U methyltransferase family. TrmA subfamily.

The enzyme catalyses uridine(54) in tRNA + S-adenosyl-L-methionine = 5-methyluridine(54) in tRNA + S-adenosyl-L-homocysteine + H(+). The catalysed reaction is uridine(341) in tmRNA + S-adenosyl-L-methionine = 5-methyluridine(341) in tmRNA + S-adenosyl-L-homocysteine + H(+). Its function is as follows. Dual-specificity methyltransferase that catalyzes the formation of 5-methyluridine at position 54 (m5U54) in all tRNAs, and that of position 341 (m5U341) in tmRNA (transfer-mRNA). In Pseudomonas syringae pv. syringae (strain B728a), this protein is tRNA/tmRNA (uracil-C(5))-methyltransferase.